We begin with the raw amino-acid sequence, 179 residues long: GTP-dependent dephospho-CoA kinase (179 aa).

GTP is bound by residues aspartate 43, valine 45, aspartate 62, glutamate 120, and aspartate 143.

This sequence belongs to the GTP-dependent DPCK family.

The enzyme catalyses 3'-dephospho-CoA + GTP = GDP + CoA + H(+). The protein operates within cofactor biosynthesis; coenzyme A biosynthesis. Catalyzes the GTP-dependent phosphorylation of the 3'-hydroxyl group of dephosphocoenzyme A to form coenzyme A (CoA). In Haloarcula marismortui (strain ATCC 43049 / DSM 3752 / JCM 8966 / VKM B-1809) (Halobacterium marismortui), this protein is GTP-dependent dephospho-CoA kinase.